Here is an 83-residue protein sequence, read N- to C-terminus: MQWLAFVAPRWRCVCDQELSAQTGHVTDDVGVSTPAKEGIMQGNGARCDVGFPPCKDNKCYCCIGGRTHARYSTLAECSHACF.

The signal sequence occupies residues 1 to 22; sequence MQWLAFVAPRWRCVCDQELSAQ. Cys-60 and Cys-82 form a disulfide bridge.

Belongs to the MEG family. Expressed in endosperm, anther and pollen.

This chain is Protein MATERNALLY EXPRESSED GENE 3 (MEG3), found in Zea mays (Maize).